Consider the following 217-residue polypeptide: Ribonuclease HII (217 aa).

The region spanning 27-216 (SRVAGVDEAG…VKESIQEGVC (190 aa)) is the RNase H type-2 domain. Positions 33, 34, and 126 each coordinate a divalent metal cation.

It belongs to the RNase HII family. Mn(2+) is required as a cofactor. The cofactor is Mg(2+).

It localises to the cytoplasm. The catalysed reaction is Endonucleolytic cleavage to 5'-phosphomonoester.. Its function is as follows. Endonuclease that specifically degrades the RNA of RNA-DNA hybrids. In Chlamydia trachomatis serovar A (strain ATCC VR-571B / DSM 19440 / HAR-13), this protein is Ribonuclease HII.